A 313-amino-acid chain; its full sequence is tRNA uridine(34) hydroxylase (313 aa).

A Rhodanese domain is found at 127 to 225; the sequence is SDPDTILIDT…YLETVPEEES (99 aa). Cysteine 185 acts as the Cysteine persulfide intermediate in catalysis.

This sequence belongs to the TrhO family.

It carries out the reaction uridine(34) in tRNA + AH2 + O2 = 5-hydroxyuridine(34) in tRNA + A + H2O. Catalyzes oxygen-dependent 5-hydroxyuridine (ho5U) modification at position 34 in tRNAs. The polypeptide is tRNA uridine(34) hydroxylase (Gluconobacter oxydans (strain 621H) (Gluconobacter suboxydans)).